Here is a 551-residue protein sequence, read N- to C-terminus: Glucans biosynthesis protein D (551 aa).

The tat-type signal signal peptide spans M1–A32.

The protein belongs to the OpgD/OpgG family. In terms of processing, predicted to be exported by the Tat system. The position of the signal peptide cleavage has not been experimentally proven.

The protein resides in the periplasm. Its pathway is glycan metabolism; osmoregulated periplasmic glucan (OPG) biosynthesis. Functionally, probably involved in the control of the structural glucose backbone of osmoregulated periplasmic glucans (OPGs). The sequence is that of Glucans biosynthesis protein D from Salmonella enteritidis PT4 (strain P125109).